The primary structure comprises 134 residues: Aspartate 1-decarboxylase (134 aa).

Ser25 acts as the Schiff-base intermediate with substrate; via pyruvic acid in catalysis. Ser25 bears the Pyruvic acid (Ser) mark. Residue Thr57 coordinates substrate. Catalysis depends on Tyr58, which acts as the Proton donor. 73-75 serves as a coordination point for substrate; that stretch reads GAA.

This sequence belongs to the PanD family. In terms of assembly, heterooctamer of four alpha and four beta subunits. Pyruvate is required as a cofactor. Is synthesized initially as an inactive proenzyme, which is activated by self-cleavage at a specific serine bond to produce a beta-subunit with a hydroxyl group at its C-terminus and an alpha-subunit with a pyruvoyl group at its N-terminus.

It is found in the cytoplasm. The enzyme catalyses L-aspartate + H(+) = beta-alanine + CO2. It functions in the pathway cofactor biosynthesis; (R)-pantothenate biosynthesis; beta-alanine from L-aspartate: step 1/1. In terms of biological role, catalyzes the pyruvoyl-dependent decarboxylation of aspartate to produce beta-alanine. This is Aspartate 1-decarboxylase from Citrifermentans bemidjiense (strain ATCC BAA-1014 / DSM 16622 / JCM 12645 / Bem) (Geobacter bemidjiensis).